Here is a 196-residue protein sequence, read N- to C-terminus: Holliday junction branch migration complex subunit RuvA (196 aa).

The segment at 1 to 63 (MINKIYGKIV…DDDVKLFGFL (63 aa)) is domain I. The segment at 64–142 (NISEREVFED…KGDESSSYML (79 aa)) is domain II. A region of interest (flexible linker) is located at residue K143. Residues 143–196 (KFKELEQSIVNMGFDRKLVVVAFREIMLSDKFLILKEAEQEQFLFTETLKRLSV) are domain III.

This sequence belongs to the RuvA family. In terms of assembly, homotetramer. Forms an RuvA(8)-RuvB(12)-Holliday junction (HJ) complex. HJ DNA is sandwiched between 2 RuvA tetramers; dsDNA enters through RuvA and exits via RuvB. An RuvB hexamer assembles on each DNA strand where it exits the tetramer. Each RuvB hexamer is contacted by two RuvA subunits (via domain III) on 2 adjacent RuvB subunits; this complex drives branch migration. In the full resolvosome a probable DNA-RuvA(4)-RuvB(12)-RuvC(2) complex forms which resolves the HJ.

It is found in the cytoplasm. Its function is as follows. The RuvA-RuvB-RuvC complex processes Holliday junction (HJ) DNA during genetic recombination and DNA repair, while the RuvA-RuvB complex plays an important role in the rescue of blocked DNA replication forks via replication fork reversal (RFR). RuvA specifically binds to HJ cruciform DNA, conferring on it an open structure. The RuvB hexamer acts as an ATP-dependent pump, pulling dsDNA into and through the RuvAB complex. HJ branch migration allows RuvC to scan DNA until it finds its consensus sequence, where it cleaves and resolves the cruciform DNA. This is Holliday junction branch migration complex subunit RuvA from Borrelia duttonii (strain Ly).